The following is a 349-amino-acid chain: ATPase GET3 (349 aa).

ATP is bound at residue 26 to 33 (KGGVGKTT). Residue aspartate 57 is part of the active site. ATP-binding residues include glutamate 242 and asparagine 269. Zn(2+) is bound by residues cysteine 281 and cysteine 284.

Belongs to the arsA ATPase family. Homodimer. Component of the Golgi to ER traffic (GET) complex, which is composed of GET1, GET2 and GET3. Within the complex, GET1 and GET2 form a heterotetramer which is stabilized by phosphatidylinositol binding and which binds to the GET3 homodimer. Interacts with the chloride channel protein GEF1.

It is found in the cytoplasm. The protein resides in the endoplasmic reticulum. The protein localises to the golgi apparatus. In terms of biological role, ATPase required for the post-translational delivery of tail-anchored (TA) proteins to the endoplasmic reticulum. Recognizes and selectively binds the transmembrane domain of TA proteins in the cytosol. This complex then targets to the endoplasmic reticulum by membrane-bound receptors GET1 and GET2, where the tail-anchored protein is released for insertion. This process is regulated by ATP binding and hydrolysis. ATP binding drives the homodimer towards the closed dimer state, facilitating recognition of newly synthesized TA membrane proteins. ATP hydrolysis is required for insertion. Subsequently, the homodimer reverts towards the open dimer state, lowering its affinity for the GET1-GET2 receptor, and returning it to the cytosol to initiate a new round of targeting. Cooperates with the HDEL receptor ERD2 to mediate the ATP-dependent retrieval of resident ER proteins that contain a C-terminal H-D-E-L retention signal from the Golgi to the ER. Involved in low-level resistance to the oxyanions arsenite and arsenate, and in heat tolerance. The protein is ATPase GET3 of Lodderomyces elongisporus (strain ATCC 11503 / CBS 2605 / JCM 1781 / NBRC 1676 / NRRL YB-4239) (Yeast).